The sequence spans 315 residues: CAAX prenyl protease 2 (315 aa).

Topologically, residues 1–3 are lumenal; the sequence is MLQ. Residues 4-23 traverse the membrane as a helical segment; sequence FSTFLVLLYISISYVLPLYA. At 24 to 44 the chain is on the cytoplasmic side; sequence TSQPEGSKRDNPRTIKSRMQK. The chain crosses the membrane as a helical span at residues 45 to 65; it reads LTIMLISNLFLVPFLQSQLSS. Over 66–74 the chain is Lumenal; the sequence is TTSHISFKD. A helical membrane pass occupies residues 75-95; sequence AFLGLGIIPGYYAALPNPWQF. Residues 96–105 are Cytoplasmic-facing; sequence SQFVKDLTKC. Residues 106 to 126 traverse the membrane as a helical segment; the sequence is VAMLLTLYCGPVLDFVLYHLL. Over 127-148 the chain is Lumenal; the sequence is NPKSSILEDFYHEFLNIWSFRN. The chain crosses the membrane as a helical span at residues 149 to 169; sequence FIFAPITEEIFYTSMLLTTYL. Residues E156 and H194 each act as proton donor/acceptor in the active site. The Cytoplasmic portion of the chain corresponds to 170 to 208; the sequence is NLIPHSQLSYQQLFWQPSLFFGLAHAHHAYEQLQEGSMT. A helical transmembrane segment spans residues 209–229; sequence TVSILLTTCFQILYTTLFGGL. Residues 230–237 lie on the Lumenal side of the membrane; sequence TKFVFVRT. The chain crosses the membrane as a helical span at residues 238–258; that stretch reads GGNLWCCIILHALCNIMGFPG. Residues 259–275 lie on the Cytoplasmic side of the membrane; it reads PSRLNLHFTVVDKKAGR. The helical transmembrane segment at 276–296 threads the bilayer; the sequence is ISKLVSIWNKCYFALLVLGLI. At 297–315 the chain is on the lumenal side; the sequence is SLKDTLQTLVGTPGYRITL.

Belongs to the peptidase U48 family.

The protein localises to the endoplasmic reticulum membrane. It catalyses the reaction Hydrolyzes the peptide bond -P2-(S-farnesyl or geranylgeranyl)C-P1'-P2'-P3'-COOH where P1' and P2' are amino acids with aliphatic sidechains and P3' is any C-terminal residue.. Protease involved in the processing of a variety of prenylated proteins containing the C-terminal CAAX motif, where C is a cysteine modified with an isoprenoid lipid, A is an aliphatic amino acid and X is any C-terminal amino acid. Proteolytically removes the C-terminal three residues of farnesylated proteins, leaving the prenylated cysteine as the new C-terminus. Target proteins include the a-factor mating pheromone and RAS. Its substrate specificity is overlapping but distinct with that of STE24. The polypeptide is CAAX prenyl protease 2 (RCE1) (Saccharomyces cerevisiae (strain ATCC 204508 / S288c) (Baker's yeast)).